We begin with the raw amino-acid sequence, 243 residues long: DNA repair protein RecO (243 aa).

Belongs to the RecO family.

Involved in DNA repair and RecF pathway recombination. The protein is DNA repair protein RecO of Geobacter sulfurreducens (strain ATCC 51573 / DSM 12127 / PCA).